A 976-amino-acid polypeptide reads, in one-letter code: Ephrin type-A receptor 2 (976 aa).

Positions 1 to 23 (MELQAARACFALLWGCALAAAAA) are cleaved as a signal peptide. The mediates interaction with CLDN4 stretch occupies residues 1-206 (MELQAARACF…YYKKCPELLQ (206 aa)). Residues 24–537 (AQGKEVVLLD…SPEGSGNLAV (514 aa)) lie on the Extracellular side of the membrane. One can recognise an Eph LBD domain in the interval 28–206 (EVVLLDFAAA…YYKKCPELLQ (179 aa)). 2 cysteine pairs are disulfide-bonded: cysteine 70-cysteine 188 and cysteine 105-cysteine 115. Residues 328–432 (PPSAPHYLTA…TSRSFRTASV (105 aa)) enclose the Fibronectin type-III 1 domain. 2 N-linked (GlcNAc...) asparagine glycosylation sites follow: asparagine 407 and asparagine 435. A Fibronectin type-III 2 domain is found at 438–529 (EPPKVRLEGR…KVHEFQTLSP (92 aa)). A helical transmembrane segment spans residues 538-558 (IGGVAVGVVLLLVLAGVGFFI). The Cytoplasmic segment spans residues 559–976 (HRRRKNQRAR…DQVNTVGIPI (418 aa)). At serine 570 the chain carries Phosphoserine. The residue at position 575 (tyrosine 575) is a Phosphotyrosine. Position 579 is a phosphoserine (serine 579). Residue tyrosine 588 is modified to Phosphotyrosine; by autocatalysis. The residue at position 594 (tyrosine 594) is a Phosphotyrosine. Positions 606 to 906 (TEIHPSCVTR…STSGSEGVPF (301 aa)) are mediates interaction with ARHGEF16 and ELMO2. The Protein kinase domain occupies 613-875 (VTRQKVIGAG…DIVSILDKLI (263 aa)). 619–627 (IGAGEFGEV) is an ATP binding site. Tyrosine 628 carries the phosphotyrosine modification. Position 646 (lysine 646) interacts with ATP. Position 647 is a phosphothreonine (threonine 647). Phosphotyrosine; by autocatalysis is present on tyrosine 735. Aspartate 739 acts as the Proton acceptor in catalysis. Tyrosine 772 is subject to Phosphotyrosine. Phosphoserine occurs at positions 869 and 892. Residues 886–976 (DFDPRVSIRL…DQVNTVGIPI (91 aa)) are negatively regulates interaction with ARHGEF16. Phosphoserine; by PKB/AKT1, RPS6KA1, RPS6KA3 AND PKA is present on serine 897. Serine 901 is subject to Phosphoserine. Residues 904–968 (VPFRTVSEWL…AYSLLGLKDQ (65 aa)) form the SAM domain. Tyrosine 921 is modified (phosphotyrosine; by autocatalysis). Tyrosine 930 carries the post-translational modification Phosphotyrosine. The PDZ-binding motif lies at 974–976 (IPI).

This sequence belongs to the protein kinase superfamily. Tyr protein kinase family. Ephrin receptor subfamily. In terms of assembly, homodimer. Interacts with SLA. Interacts (phosphorylated form) with VAV2, VAV3 and PI3-kinase p85 subunit (PIK3R1, PIK3R2 or PIK3R3); critical for the EFNA1-induced activation of RAC1 which stimulates cell migration. Interacts with INPPL1; regulates activated EPHA2 endocytosis and degradation. Interacts (inactivated form) with PTK2/FAK1 and interacts (EFNA1 ligand-activated form) with PTPN11; regulates integrin-mediated adhesion. Interacts with ARHGEF16, DOCK4 and ELMO2; mediates ligand-independent activation of RAC1 which stimulates cell migration. Interacts with CLDN4; phosphorylates CLDN4 and may regulate tight junctions. Interacts with ACP1. Interacts (via SAM domain) with ANKS1A (via SAM domain). Interacts with CEMIP. Interacts with NCK1; may regulate EPHA2 activity in cell migration and adhesion. Interacts with TIMD4. (Microbial infection) Interacts with human herpes virus 8/HHV-8 glycoprotein L/gL and glycoprotein H/gH heterodimer; this interaction triggers EPHA2 phosphorylation and endocytosis, allowing virus entry. As to quaternary structure, (Microbial infection) Interacts with human cytomegalovirus (HCMV) glycoprotein L/gL and glycoprotein H/gH heterodimer. In terms of assembly, (Microbial infection) Interacts with Epstein-Barr virus/HHV-4 glycoprotein L/gL and glycoprotein H/gH heterodimer; this interaction facilitates virus internalization and fusion. Post-translationally, autophosphorylates. Phosphorylated on tyrosine upon binding and activation by EFNA1. Phosphorylated residues Tyr-588 and Tyr-594 are required for binding VAV2 and VAV3 while phosphorylated residues Tyr-735 and Tyr-930 are required for binding PI3-kinase p85 subunit (PIK3R1, PIK3R2 or PIK3R3). These phosphorylated residues are critical for recruitment of VAV2 and VAV3 and PI3-kinase p85 subunit which transduce downstream signaling to activate RAC1 GTPase and cell migration. Dephosphorylation of Tyr-930 by PTPRF prevents the interaction of EPHA2 with NCK1. Phosphorylated at Ser-897 by PKB; serum-induced phosphorylation which targets EPHA2 to the cell leading edge and stimulates cell migration. Phosphorylation by PKB is inhibited by EFNA1-activated EPHA2 which regulates PKB activity via a reciprocal regulatory loop. Phosphorylated at Ser-897 in response to TNF by RPS6KA1 and RPS6KA3; RPS6KA-EPHA2 signaling pathway controls cell migration. Phosphorylated at Ser-897 by PKA; blocks cell retraction induced by EPHA2 kinase activity. Dephosphorylated by ACP1. Ubiquitinated by CHIP/STUB1. Ubiquitination is regulated by the HSP90 chaperone and regulates the receptor stability and activity through proteasomal degradation. ANKS1A prevents ubiquitination and degradation. Expressed in brain and glioma tissue and glioma cell lines (at protein level). Expressed most highly in tissues that contain a high proportion of epithelial cells, e.g. skin, intestine, lung, and ovary.

The protein resides in the cell membrane. Its subcellular location is the cell projection. The protein localises to the ruffle membrane. It localises to the lamellipodium membrane. It is found in the cell junction. The protein resides in the focal adhesion. It catalyses the reaction L-tyrosyl-[protein] + ATP = O-phospho-L-tyrosyl-[protein] + ADP + H(+). Functionally, receptor tyrosine kinase which binds promiscuously membrane-bound ephrin-A family ligands residing on adjacent cells, leading to contact-dependent bidirectional signaling into neighboring cells. The signaling pathway downstream of the receptor is referred to as forward signaling while the signaling pathway downstream of the ephrin ligand is referred to as reverse signaling. Activated by the ligand ephrin-A1/EFNA1 regulates migration, integrin-mediated adhesion, proliferation and differentiation of cells. Regulates cell adhesion and differentiation through DSG1/desmoglein-1 and inhibition of the ERK1/ERK2 (MAPK3/MAPK1, respectively) signaling pathway. May also participate in UV radiation-induced apoptosis and have a ligand-independent stimulatory effect on chemotactic cell migration. During development, may function in distinctive aspects of pattern formation and subsequently in development of several fetal tissues. Involved for instance in angiogenesis, in early hindbrain development and epithelial proliferation and branching morphogenesis during mammary gland development. Engaged by the ligand ephrin-A5/EFNA5 may regulate lens fiber cells shape and interactions and be important for lens transparency development and maintenance. With ephrin-A2/EFNA2 may play a role in bone remodeling through regulation of osteoclastogenesis and osteoblastogenesis. In terms of biological role, (Microbial infection) Acts as a receptor for hepatitis C virus (HCV) in hepatocytes and facilitates its cell entry. Mediates HCV entry by promoting the formation of the CD81-CLDN1 receptor complexes that are essential for HCV entry and by enhancing membrane fusion of cells expressing HCV envelope glycoproteins. Its function is as follows. Acts as a receptor for human cytomegalovirus (HCMV) to mediate viral entry and fusion in glioblastoma cells. This chain is Ephrin type-A receptor 2 (EPHA2), found in Homo sapiens (Human).